We begin with the raw amino-acid sequence, 387 residues long: Patatin group D-3 (387 aa).

A signal peptide spans 1–23 (MATTKSFLILIVMILATTSSTFA). The PNPLA domain occupies 32–230 (LSIDGGGIKG…TVADPALLSI (199 aa)). The GXGXXG motif lies at 36–41 (GGGIKG). The short motif at 75–79 (GTSTG) is the GXSXG element. S77 functions as the Nucleophile in the catalytic mechanism. N115 carries an N-linked (GlcNAc...) asparagine glycan. The active-site Proton acceptor is the D216. The short motif at 216-218 (DGA) is the DGA/G element. Positions 361–385 (ETYEEALKRFAKLLSDRKKLRANKA) form a coiled coil.

It belongs to the patatin family. Tuber.

The protein resides in the vacuole. Its function is as follows. Probable lipolytic acyl hydrolase (LAH), an activity which is thought to be involved in the response of tubers to pathogens. The chain is Patatin group D-3 from Solanum tuberosum (Potato).